The sequence spans 426 residues: DNA polymerase processivity factor component OPG148 (426 aa).

Belongs to the orthopoxvirus OPG148 family. As to quaternary structure, interacts with the DNA polymerase catalytic subunit OPG071. Interacts with UDG/OPG116. Component of the uracil-DNA glycosylase(UDG)-OPG148-polymerase complex; OPG148 and UDG form a heterodimeric processivity factor that associates with OPG071 to form the processive polymerase holoenzyme. Interacts with OPG117.

Plays an essential role in viral DNA replication by acting as the polymerase processivity factor together with protein OPG116. Serves as a bridge which links the DNA polymerase OPG071 and the uracil DNA glycosylase. The polypeptide is DNA polymerase processivity factor component OPG148 (OPG148) (Vaccinia virus (strain Copenhagen) (VACV)).